Reading from the N-terminus, the 306-residue chain is Ribosomal protein L11 methyltransferase (306 aa).

S-adenosyl-L-methionine contacts are provided by Thr-139, Gly-173, Asp-195, and Asn-242.

It belongs to the methyltransferase superfamily. PrmA family.

It localises to the cytoplasm. The catalysed reaction is L-lysyl-[protein] + 3 S-adenosyl-L-methionine = N(6),N(6),N(6)-trimethyl-L-lysyl-[protein] + 3 S-adenosyl-L-homocysteine + 3 H(+). Methylates ribosomal protein L11. This chain is Ribosomal protein L11 methyltransferase, found in Trichormus variabilis (strain ATCC 29413 / PCC 7937) (Anabaena variabilis).